A 634-amino-acid polypeptide reads, in one-letter code: Sodium-dependent multivitamin transporter (634 aa).

The next 12 helical transmembrane spans lie at 23-43 (FSVVDYVVFGLLLVLSLVIGL), 65-85 (MGCLPVALSLLATFQSAVAIL), 100-120 (FLGCSYFLGLLIPAHIFIPVF), 142-162 (ICGTVTFIFQMVIYMGVALYA), 175-195 (LWLSVLALGIVCNIYTALGGL), 207-227 (LVMFLGQLVVIIVGAARVGGL), 255-275 (FWTLAFGGVFMMLSLYGVNQA), 295-315 (AVFPCQQVALCMSCLIGLVMF), 350-370 (LPGLFVACLFSGSLSTISSAF), 403-423 (FAYGLVCLGMAYISSHLGSVL), 427-447 (LSIFGMVGGPLLGLFCLGLFF), and 455-475 (AIVGLLTGLTMAFWIGIGSIV). N-linked (GlcNAc...) asparagine glycosylation is found at Asn488 and Asn497. Residues 526 to 546 (LWYSAHNSTTVIVVGLIVSLL) form a helical membrane-spanning segment.

Belongs to the sodium:solute symporter (SSF) (TC 2.A.21) family. As to quaternary structure, interacts with PDZD11. Expressed in the intestinal mucosa, liver and kidney (at protein level). Expressed in the colon.

The protein resides in the cell membrane. The protein localises to the apical cell membrane. It carries out the reaction biotin(out) + 2 Na(+)(out) = biotin(in) + 2 Na(+)(in). It catalyses the reaction (R)-pantothenate(out) + 2 Na(+)(out) = (R)-pantothenate(in) + 2 Na(+)(in). The catalysed reaction is (R)-lipoate(out) + 2 Na(+)(out) = (R)-lipoate(in) + 2 Na(+)(in). The enzyme catalyses iodide(out) + 2 Na(+)(out) = iodide(in) + 2 Na(+)(in). Its function is as follows. Sodium-dependent multivitamin transporter that mediates the electrogenic transport of pantothenate, biotin, lipoate and iodide. Functions as a Na(+)-coupled substrate symporter where the stoichiometry of Na(+):substrate is 2:1, creating an electrochemical Na(+) gradient used as driving force for substrate uptake. Required for biotin and pantothenate uptake in the intestine across the brush border membrane. Plays a role in the maintenance of intestinal mucosa integrity, by providing the gut mucosa with biotin. Contributes to the luminal uptake of biotin and pantothenate into the brain across the blood-brain barrier. This is Sodium-dependent multivitamin transporter from Mus musculus (Mouse).